The chain runs to 597 residues: Formate--tetrahydrofolate ligase (597 aa).

84–91 contacts ATP; the sequence is TPLGEGKS.

This sequence belongs to the formate--tetrahydrofolate ligase family.

The enzyme catalyses (6S)-5,6,7,8-tetrahydrofolate + formate + ATP = (6R)-10-formyltetrahydrofolate + ADP + phosphate. Its pathway is one-carbon metabolism; tetrahydrofolate interconversion. The chain is Formate--tetrahydrofolate ligase from Dehalococcoides mccartyi (strain ATCC BAA-2266 / KCTC 15142 / 195) (Dehalococcoides ethenogenes (strain 195)).